Consider the following 941-residue polypeptide: Pre-mRNA-processing factor 6 (941 aa).

Residues 1 to 79 form a disordered region; the sequence is MNKKKKPFLG…DEDLNDTNYD (79 aa). Over residues 39–65 the composition is skewed to basic and acidic residues; it reads DANDPVDDRHAPPGKRTVGDQMKKNQA. Acidic residues predominate over residues 66-78; it reads ADDDDEDLNDTNY. S143 bears the Phosphoserine mark. Phosphothreonine occurs at positions 180, 266, and 275. Phosphoserine is present on S279. HAT repeat units follow at residues 384 to 416, 418 to 444, 445 to 476, 554 to 586, 588 to 620, 622 to 654, 689 to 721, 723 to 755, and 855 to 887; these read TDIR…LEEP, DARI…ARLE, TYEN…LEEA, NALE…FEKN, GTRE…SKWL, GDVP…LESE, GNIS…IEEQ, ELME…LEEK, and RKIT…FELQ.

In terms of assembly, identified in the spliceosome B complex. Identified in the spliceosome C complex. Associates with the U5 snRNP particle. Component of the U4/U6-U5 tri-snRNP complex composed of the U4, U6 and U5 snRNAs and at least PRPF3, PRPF4, PRPF6, PRPF8, PRPF31, SNRNP200, TXNL4A, SNRNP40, DDX23, CD2BP2, PPIH, SNU13, EFTUD2, SART1 and USP39, LSm proteins LSm2-8 and Sm proteins. Interacts with ARAF1. Interacts with AR and NR3C1, but not ESR1, independently of the presence of hormones. Interacts with USH1G. Post-translationally, phosphorylated by PRP4K during spliceosome assembly.

The protein resides in the nucleus. The protein localises to the nucleoplasm. It localises to the nucleus speckle. Its function is as follows. Involved in pre-mRNA splicing as component of the U4/U6-U5 tri-snRNP complex, one of the building blocks of the spliceosome. Enhances dihydrotestosterone-induced transactivation activity of AR, as well as dexamethasone-induced transactivation activity of NR3C1, but does not affect estrogen-induced transactivation. The protein is Pre-mRNA-processing factor 6 (Prpf6) of Mus musculus (Mouse).